A 292-amino-acid polypeptide reads, in one-letter code: 4-hydroxy-tetrahydrodipicolinate synthase (292 aa).

T45 provides a ligand contact to pyruvate. Y133 functions as the Proton donor/acceptor in the catalytic mechanism. K161 acts as the Schiff-base intermediate with substrate in catalysis. I203 contributes to the pyruvate binding site.

The protein belongs to the DapA family. As to quaternary structure, homotetramer; dimer of dimers.

It localises to the cytoplasm. The enzyme catalyses L-aspartate 4-semialdehyde + pyruvate = (2S,4S)-4-hydroxy-2,3,4,5-tetrahydrodipicolinate + H2O + H(+). It participates in amino-acid biosynthesis; L-lysine biosynthesis via DAP pathway; (S)-tetrahydrodipicolinate from L-aspartate: step 3/4. In terms of biological role, catalyzes the condensation of (S)-aspartate-beta-semialdehyde [(S)-ASA] and pyruvate to 4-hydroxy-tetrahydrodipicolinate (HTPA). The chain is 4-hydroxy-tetrahydrodipicolinate synthase from Azoarcus sp. (strain BH72).